Consider the following 251-residue polypeptide: ATP synthase subunit a 2 (251 aa).

The next 5 helical transmembrane spans lie at 35–55 (GQVF…SLLA), 94–114 (LPFI…GSLI), 133–153 (INTT…AGLS), 198–218 (LVVA…LMAL), and 219–239 (GLFT…AYIH).

Belongs to the ATPase A chain family. In terms of assembly, F-type ATPases have 2 components, CF(1) - the catalytic core - and CF(0) - the membrane proton channel. CF(1) has five subunits: alpha(3), beta(3), gamma(1), delta(1), epsilon(1). CF(0) has four main subunits: a, b, b' and c.

The protein localises to the cellular thylakoid membrane. Key component of the proton channel; it plays a direct role in the translocation of protons across the membrane. In Crocosphaera subtropica (strain ATCC 51142 / BH68) (Cyanothece sp. (strain ATCC 51142)), this protein is ATP synthase subunit a 2.